The sequence spans 417 residues: Serine hydroxymethyltransferase (417 aa).

Residues Leu-121 and 125–127 (GHL) contribute to the (6S)-5,6,7,8-tetrahydrofolate site. At Lys-229 the chain carries N6-(pyridoxal phosphate)lysine. A (6S)-5,6,7,8-tetrahydrofolate-binding site is contributed by 355-357 (SPF).

It belongs to the SHMT family. Homodimer. It depends on pyridoxal 5'-phosphate as a cofactor.

The protein localises to the cytoplasm. It catalyses the reaction (6R)-5,10-methylene-5,6,7,8-tetrahydrofolate + glycine + H2O = (6S)-5,6,7,8-tetrahydrofolate + L-serine. It participates in one-carbon metabolism; tetrahydrofolate interconversion. The protein operates within amino-acid biosynthesis; glycine biosynthesis; glycine from L-serine: step 1/1. Its function is as follows. Catalyzes the reversible interconversion of serine and glycine with tetrahydrofolate (THF) serving as the one-carbon carrier. This reaction serves as the major source of one-carbon groups required for the biosynthesis of purines, thymidylate, methionine, and other important biomolecules. Also exhibits THF-independent aldolase activity toward beta-hydroxyamino acids, producing glycine and aldehydes, via a retro-aldol mechanism. In Buchnera aphidicola subsp. Schizaphis graminum (strain Sg), this protein is Serine hydroxymethyltransferase.